Reading from the N-terminus, the 534-residue chain is CTP synthase (534 aa).

The amidoligase domain stretch occupies residues 1-267 (MTKYIFVTGG…DQIVCDHLKL (267 aa)). Residue S13 coordinates CTP. Residue S13 coordinates UTP. 14 to 19 (SIGKGI) serves as a coordination point for ATP. L-glutamine is bound at residue Y54. ATP is bound at residue D71. Mg(2+) is bound by residues D71 and E141. CTP is bound by residues 148–150 (DIE), 188–193 (KTKPTQ), and K224. UTP-binding positions include 188–193 (KTKPTQ) and K224. 240 to 242 (RDV) serves as a coordination point for ATP. The 243-residue stretch at 292-534 (KIALVGKYVE…FVTAAIKNSN (243 aa)) folds into the Glutamine amidotransferase type-1 domain. G354 contributes to the L-glutamine binding site. The active-site Nucleophile; for glutamine hydrolysis is C381. Residues 382–385 (LGMQ), E405, and R463 each bind L-glutamine. Residues H508 and E510 contribute to the active site.

The protein belongs to the CTP synthase family. In terms of assembly, homotetramer.

The enzyme catalyses UTP + L-glutamine + ATP + H2O = CTP + L-glutamate + ADP + phosphate + 2 H(+). The catalysed reaction is L-glutamine + H2O = L-glutamate + NH4(+). It catalyses the reaction UTP + NH4(+) + ATP = CTP + ADP + phosphate + 2 H(+). The protein operates within pyrimidine metabolism; CTP biosynthesis via de novo pathway; CTP from UDP: step 2/2. Its activity is regulated as follows. Allosterically activated by GTP, when glutamine is the substrate; GTP has no effect on the reaction when ammonia is the substrate. The allosteric effector GTP functions by stabilizing the protein conformation that binds the tetrahedral intermediate(s) formed during glutamine hydrolysis. Inhibited by the product CTP, via allosteric rather than competitive inhibition. In terms of biological role, catalyzes the ATP-dependent amination of UTP to CTP with either L-glutamine or ammonia as the source of nitrogen. Regulates intracellular CTP levels through interactions with the four ribonucleotide triphosphates. The chain is CTP synthase from Streptococcus pyogenes serotype M4 (strain MGAS10750).